Consider the following 306-residue polypeptide: Serine/threonine-protein phosphatase PP2A-1 catalytic subunit (306 aa).

Mn(2+) is bound by residues Asp54, His56, Asp82, and Asn114. His115 (proton donor) is an active-site residue. Mn(2+) contacts are provided by His164 and His238. A Leucine methyl ester modification is found at Leu306.

It belongs to the PPP phosphatase family. PP-2A subfamily. PP2A consists of a common heterodimeric core enzyme, composed of a 36 kDa catalytic subunit (subunit C) and a 65 kDa constant regulatory subunit (subunit A), that associates with a variety of regulatory subunits such as subunits B (the R2/B/PR55/B55, R3/B''/PR72/PR130/PR59 and R5/B'/B56 families). Interacts with TAF12B. Interacts with SRK2E/OST1. Interacts with TAP46. It depends on Mn(2+) as a cofactor. In terms of processing, reversibly methyl esterified on Leu-306 by leucine carboxyl methyltransferase 1 (LCMT1) and pectin methylesterase 1 (PME1). Carboxyl methylation influences the affinity of the catalytic subunit for the different regulatory subunits, thereby modulating the PP2A holoenzyme's substrate specificity, enzyme activity and cellular localization. Phosphorylation of either threonine (by autophosphorylation-activated protein kinase) or tyrosine results in inactivation of the phosphatase. Auto-dephosphorylation has been suggested as a mechanism for reactivation.

The protein localises to the cytoplasm. The enzyme catalyses O-phospho-L-seryl-[protein] + H2O = L-seryl-[protein] + phosphate. It catalyses the reaction O-phospho-L-threonyl-[protein] + H2O = L-threonyl-[protein] + phosphate. This chain is Serine/threonine-protein phosphatase PP2A-1 catalytic subunit, found in Arabidopsis thaliana (Mouse-ear cress).